A 470-amino-acid polypeptide reads, in one-letter code: 1-aminocyclopropane-1-carboxylate synthase 9 (470 aa).

Substrate is bound by residues E47 and Y85. K272 carries the N6-(pyridoxal phosphate)lysine modification.

This sequence belongs to the class-I pyridoxal-phosphate-dependent aminotransferase family. As to quaternary structure, homodimer and heterodimer. In vivo, the relevance of heterodimerization with other ACS enzymes is however unsure. Interacts (via its C-terminal region) with FEI1, FEI2, ETO1 and EOL1. It depends on pyridoxal 5'-phosphate as a cofactor. Post-translationally, may be processed at its C-terminus. Expressed in roots and siliques.

It catalyses the reaction S-adenosyl-L-methionine = 1-aminocyclopropane-1-carboxylate + S-methyl-5'-thioadenosine + H(+). Its pathway is alkene biosynthesis; ethylene biosynthesis via S-adenosyl-L-methionine; ethylene from S-adenosyl-L-methionine: step 1/2. Functionally, 1-aminocyclopropane-1-carboxylate synthase (ACS) enzymes catalyze the conversion of S-adenosyl-L-methionine (SAM) into 1-aminocyclopropane-1-carboxylate (ACC), a direct precursor of ethylene. The polypeptide is 1-aminocyclopropane-1-carboxylate synthase 9 (ACS9) (Arabidopsis thaliana (Mouse-ear cress)).